Here is an 857-residue protein sequence, read N- to C-terminus: Protein app1 (857 aa).

The ADF-H domain occupies Asp6 to Ala133. Disordered regions lie at residues Ala167–Arg562, Glu585–Arg622, and Gln693–Thr723. Basic and acidic residues predominate over residues Lys193 to Ser204. The segment covering Lys205 to Asn217 has biased composition (low complexity). Over residues Ala229 to Pro240 the composition is skewed to basic and acidic residues. 5 stretches are compositionally biased toward polar residues: residues Ser276–Pro295, Pro371–Thr385, Lys399–Gln409, Lys443–Gly452, and Ser498–Thr511. The span at Val522–Gln561 shows a compositional bias: low complexity. 2 stretches are compositionally biased toward pro residues: residues Pro587–Pro596 and Pro602–Pro611. Positions Val612–Arg622 are enriched in low complexity. SH3 domains follow at residues Pro725–Pro785 and Gly800–Ile857.

This Schizosaccharomyces pombe (strain 972 / ATCC 24843) (Fission yeast) protein is Protein app1 (app1).